The following is a 200-amino-acid chain: Proteasome subunit beta 2 (200 aa).

A propeptide spans 1–7 (METKKTG) (removed in mature form; by autocatalysis). Thr8 acts as the Nucleophile in catalysis.

This sequence belongs to the peptidase T1B family. As to quaternary structure, the 20S proteasome core is composed of 14 alpha and 14 beta subunits that assemble into four stacked heptameric rings, resulting in a barrel-shaped structure. The two inner rings, each composed of seven catalytic beta subunits, are sandwiched by two outer rings, each composed of seven alpha subunits. The catalytic chamber with the active sites is on the inside of the barrel. Has a gated structure, the ends of the cylinder being occluded by the N-termini of the alpha-subunits. Is capped at one or both ends by the proteasome regulatory ATPase, PAN.

It is found in the cytoplasm. It catalyses the reaction Cleavage of peptide bonds with very broad specificity.. The formation of the proteasomal ATPase PAN-20S proteasome complex, via the docking of the C-termini of PAN into the intersubunit pockets in the alpha-rings, triggers opening of the gate for substrate entry. Interconversion between the open-gate and close-gate conformations leads to a dynamic regulation of the 20S proteasome proteolysis activity. In terms of biological role, component of the proteasome core, a large protease complex with broad specificity involved in protein degradation. This is Proteasome subunit beta 2 from Thermococcus onnurineus (strain NA1).